Consider the following 276-residue polypeptide: 4-deoxy-L-threo-5-hexosulose-uronate ketol-isomerase (276 aa).

The Zn(2+) site is built by H194, H196, E201, and H243.

It belongs to the KduI family. Zn(2+) serves as cofactor.

It catalyses the reaction 5-dehydro-4-deoxy-D-glucuronate = 3-deoxy-D-glycero-2,5-hexodiulosonate. It participates in glycan metabolism; pectin degradation; 2-dehydro-3-deoxy-D-gluconate from pectin: step 4/5. Functionally, catalyzes the isomerization of 5-dehydro-4-deoxy-D-glucuronate to 3-deoxy-D-glycero-2,5-hexodiulosonate. The polypeptide is 4-deoxy-L-threo-5-hexosulose-uronate ketol-isomerase (Caldicellulosiruptor bescii (strain ATCC BAA-1888 / DSM 6725 / KCTC 15123 / Z-1320) (Anaerocellum thermophilum)).